Consider the following 34-residue polypeptide: Photosystem II reaction center protein M (34 aa).

The helical transmembrane segment at 7-27 threads the bilayer; the sequence is GFVASLLFILVPAIFLIVLYI.

Belongs to the PsbM family. PSII is composed of 1 copy each of membrane proteins PsbA, PsbB, PsbC, PsbD, PsbE, PsbF, PsbH, PsbI, PsbJ, PsbK, PsbL, PsbM, PsbT, PsbX, PsbY, PsbZ, Psb30/Ycf12, peripheral proteins PsbO, CyanoQ (PsbQ), PsbU, PsbV and a large number of cofactors. It forms dimeric complexes.

The protein localises to the cellular thylakoid membrane. In terms of biological role, one of the components of the core complex of photosystem II (PSII). PSII is a light-driven water:plastoquinone oxidoreductase that uses light energy to abstract electrons from H(2)O, generating O(2) and a proton gradient subsequently used for ATP formation. It consists of a core antenna complex that captures photons, and an electron transfer chain that converts photonic excitation into a charge separation. This subunit is found at the monomer-monomer interface. The protein is Photosystem II reaction center protein M of Parasynechococcus marenigrum (strain WH8102).